The chain runs to 361 residues: Ribosomal RNA large subunit methyltransferase M (361 aa).

Residues S187, 220 to 223 (CPGG), D239, D259, and D276 contribute to the S-adenosyl-L-methionine site. K305 serves as the catalytic Proton acceptor.

The protein belongs to the class I-like SAM-binding methyltransferase superfamily. RNA methyltransferase RlmE family. RlmM subfamily. In terms of assembly, monomer.

The protein resides in the cytoplasm. It carries out the reaction cytidine(2498) in 23S rRNA + S-adenosyl-L-methionine = 2'-O-methylcytidine(2498) in 23S rRNA + S-adenosyl-L-homocysteine + H(+). Catalyzes the 2'-O-methylation at nucleotide C2498 in 23S rRNA. This chain is Ribosomal RNA large subunit methyltransferase M, found in Shewanella sp. (strain MR-4).